Consider the following 342-residue polypeptide: S-adenosylmethionine:tRNA ribosyltransferase-isomerase (342 aa).

The protein belongs to the QueA family. As to quaternary structure, monomer.

Its subcellular location is the cytoplasm. The enzyme catalyses 7-aminomethyl-7-carbaguanosine(34) in tRNA + S-adenosyl-L-methionine = epoxyqueuosine(34) in tRNA + adenine + L-methionine + 2 H(+). The protein operates within tRNA modification; tRNA-queuosine biosynthesis. Transfers and isomerizes the ribose moiety from AdoMet to the 7-aminomethyl group of 7-deazaguanine (preQ1-tRNA) to give epoxyqueuosine (oQ-tRNA). The protein is S-adenosylmethionine:tRNA ribosyltransferase-isomerase of Novosphingobium aromaticivorans (strain ATCC 700278 / DSM 12444 / CCUG 56034 / CIP 105152 / NBRC 16084 / F199).